The chain runs to 312 residues: MLQYQIDRIDHQVSNDRSQTGVFLIGPLERGQATTLGNSLRRVLMGGLEGSAVTAVRIAGVNHEYATIPGVREDVLDILLNCKQISVDSRSQELEIGRLVVTGPADVKAKDIQFSSQVEVVDGDRPIATVQEGHNLELEIHVERGVGYRPVDRKNEETSAIDLLQIDAVFMPINRVNFTIDETAVAEGGSTRERLKMELVTDGSTSPDDALAEAANQLIELFQPLATVSMVEEIPEEPEPAAEAQIPLEELNLSVRAYNCLKRAQVNSVSDLMGFSYEDLLEIKNFGSKSADEVIEALERIGISIPQSRTSA.

The segment at 1–229 (MLQYQIDRID…ELFQPLATVS (229 aa)) is alpha N-terminal domain (alpha-NTD). The alpha C-terminal domain (alpha-CTD) stretch occupies residues 239–312 (EPAAEAQIPL…ISIPQSRTSA (74 aa)).

This sequence belongs to the RNA polymerase alpha chain family. In terms of assembly, in cyanobacteria the RNAP catalytic core is composed of 2 alpha, 1 beta, 1 beta', 1 gamma and 1 omega subunit. When a sigma factor is associated with the core the holoenzyme is formed, which can initiate transcription.

It catalyses the reaction RNA(n) + a ribonucleoside 5'-triphosphate = RNA(n+1) + diphosphate. Functionally, DNA-dependent RNA polymerase catalyzes the transcription of DNA into RNA using the four ribonucleoside triphosphates as substrates. This is DNA-directed RNA polymerase subunit alpha from Prochlorococcus marinus (strain NATL1A).